A 96-amino-acid chain; its full sequence is Co-chaperonin GroES (96 aa).

It belongs to the GroES chaperonin family. In terms of assembly, heptamer of 7 subunits arranged in a ring. Interacts with the chaperonin GroEL.

Its subcellular location is the cytoplasm. In terms of biological role, together with the chaperonin GroEL, plays an essential role in assisting protein folding. The GroEL-GroES system forms a nano-cage that allows encapsulation of the non-native substrate proteins and provides a physical environment optimized to promote and accelerate protein folding. GroES binds to the apical surface of the GroEL ring, thereby capping the opening of the GroEL channel. This is Co-chaperonin GroES from Hyphomonas neptunium (strain ATCC 15444).